Here is a 201-residue protein sequence, read N- to C-terminus: Glutathione peroxidase 1 (201 aa).

Serine 32 bears the Phosphoserine mark. Selenocysteine 47 is a catalytic residue. A non-standard amino acid (selenocysteine) is located at residue selenocysteine 47. N6-acetyllysine; alternate occurs at positions 86, 112, and 146. Residues lysine 86, lysine 112, and lysine 146 each carry the N6-succinyllysine; alternate modification. Residues serine 195 and serine 199 each carry the phosphoserine modification.

The protein belongs to the glutathione peroxidase family. As to quaternary structure, homotetramer. Interacts with MIEN1. Post-translationally, during periods of oxidative stress, Sec-47 may react with a superoxide radical, irreversibly lose hydroselenide and be converted to dehydroalanine.

It localises to the cytoplasm. It is found in the mitochondrion. The catalysed reaction is 2 glutathione + H2O2 = glutathione disulfide + 2 H2O. It catalyses the reaction a hydroperoxy polyunsaturated fatty acid + 2 glutathione = a hydroxy polyunsaturated fatty acid + glutathione disulfide + H2O. The enzyme catalyses tert-butyl hydroperoxide + 2 glutathione = tert-butanol + glutathione disulfide + H2O. It carries out the reaction cumene hydroperoxide + 2 glutathione = 2-phenylpropan-2-ol + glutathione disulfide + H2O. The catalysed reaction is (13S)-hydroperoxy-(9Z,11E)-octadecadienoate + 2 glutathione = (13S)-hydroxy-(9Z,11E)-octadecadienoate + glutathione disulfide + H2O. It catalyses the reaction (9S)-hydroperoxy-(10E,12Z)-octadecadienoate + 2 glutathione = (9S)-hydroxy-(10E,12Z)-octadecadienoate + glutathione disulfide + H2O. The enzyme catalyses (5S)-hydroperoxy-(6E,8Z,11Z,14Z)-eicosatetraenoate + 2 glutathione = (5S)-hydroxy-(6E,8Z,11Z,14Z)-eicosatetraenoate + glutathione disulfide + H2O. It carries out the reaction (12S)-hydroperoxy-(5Z,8Z,10E,14Z)-eicosatetraenoate + 2 glutathione = (12S)-hydroxy-(5Z,8Z,10E,14Z)-eicosatetraenoate + glutathione disulfide + H2O. The catalysed reaction is (12R)-hydroperoxy-(5Z,8Z,10E,14Z)-eicosatetraenoate + 2 glutathione = (12R)-hydroxy-(5Z,8Z,10E,14Z)-eicosatetraenoate + glutathione disulfide + H2O. It catalyses the reaction (15S)-hydroperoxy-(5Z,8Z,11Z,13E)-eicosatetraenoate + 2 glutathione = (15S)-hydroxy-(5Z,8Z,11Z,13E)-eicosatetraenoate + glutathione disulfide + H2O. The enzyme catalyses (5S)-hydroperoxy-(6E,8Z,11Z,14Z,17Z)-eicosapentaenoate + 2 glutathione = (5S)-hydroxy-(6E,8Z,11Z,14Z,17Z)-eicosapentaenoate + glutathione disulfide + H2O. It carries out the reaction (12S)-hydroperoxy-(5Z,8Z,10E,14Z,17Z)-eicosapentaenoate + 2 glutathione = (12S)-hydroxy-(5Z,8Z,10E,14Z,17Z)-eicosapentaenoate + glutathione disulfide + H2O. The catalysed reaction is (15S)-hydroperoxy-(5Z,8Z,11Z,13E,17Z)-eicosapentaenoate + 2 glutathione = (15S)-hydroxy-(5Z,8Z,11Z,13E,17Z)-eicosapentaenoate + glutathione disulfide + H2O. It catalyses the reaction (15S)-hydroperoxy-(11Z,13E)-eicosadienoate + 2 glutathione = (15S)-hydroxy-(11Z,13E)-eicosadienoate + glutathione disulfide + H2O. The enzyme catalyses (17S)-hydroperoxy-(4Z,7Z,10Z,13Z,15E,19Z)-docosahexaenoate + 2 glutathione = (17S)-hydroxy-(4Z,7Z,10Z,13Z,15E,19Z)-docosahexaenoate + glutathione disulfide + H2O. Catalyzes the reduction of hydroperoxides in a glutathione-dependent manner thus regulating cellular redox homeostasis. Can reduce small soluble hydroperoxides such as H2O2, cumene hydroperoxide and tert-butyl hydroperoxide, as well as several fatty acid-derived hydroperoxides. In platelets catalyzes the reduction of 12-hydroperoxyeicosatetraenoic acid, the primary product of the arachidonate 12-lipoxygenase pathway. The protein is Glutathione peroxidase 1 (GPX1) of Pongo pygmaeus (Bornean orangutan).